The sequence spans 123 residues: Small ribosomal subunit protein uS13 (123 aa).

The segment at Pro97 to Lys123 is disordered.

It belongs to the universal ribosomal protein uS13 family. In terms of assembly, part of the 30S ribosomal subunit. Forms a loose heterodimer with protein S19. Forms two bridges to the 50S subunit in the 70S ribosome.

Located at the top of the head of the 30S subunit, it contacts several helices of the 16S rRNA. In the 70S ribosome it contacts the 23S rRNA (bridge B1a) and protein L5 of the 50S subunit (bridge B1b), connecting the 2 subunits; these bridges are implicated in subunit movement. Contacts the tRNAs in the A and P-sites. The polypeptide is Small ribosomal subunit protein uS13 (Solidesulfovibrio magneticus (strain ATCC 700980 / DSM 13731 / RS-1) (Desulfovibrio magneticus)).